Here is a 927-residue protein sequence, read N- to C-terminus: Heat shock protein hsp98 (927 aa).

Residues 2 to 162 form the Clp R domain; sequence TSKMEFTDRA…TDAIQAIRGT (161 aa). 2 repeat regions span residues 7-87 and 99-162; these read FTDR…LVRL and MAPS…IRGT. The NBD1 stretch occupies residues 179-428; it reads LAKFTIDMTA…AVRVARESQP (250 aa). 224-231 contacts ATP; sequence GEPGVGKT. Residues 429-553 adopt a coiled-coil conformation; sequence EIIDSLERKL…AALNAAAAET (125 aa). The disordered stretch occupies residues 454–473; that stretch reads EASKARLEQAKKDAENVEEE. The NBD2 stretch occupies residues 562–752; that stretch reads VGPDQINEIV…IVVMTSNLGA (191 aa). ATP is bound at residue 635-642; the sequence is GPSGTGKT. The segment at 908–927 is disordered; the sequence is EDAVDEVAPESEMDEDLYDD.

Belongs to the ClpA/ClpB family. As to quaternary structure, homohexamer, forming a ring with a central pore.

The protein localises to the cytoplasm. The protein resides in the nucleus. In terms of biological role, required, in concert with Hsp40 and Hsp70 and small Hsps, for the dissociation, resolubilization and refolding of aggregates of damaged proteins after heat or other environmental stresses. Extracts proteins from aggregates by unfolding and threading them in an ATP-dependent process through the axial channel of the protein hexamer, after which they can be refolded by components of the Hsp70/Hsp40 chaperone system. This Neurospora crassa (strain ATCC 24698 / 74-OR23-1A / CBS 708.71 / DSM 1257 / FGSC 987) protein is Heat shock protein hsp98 (hsp98).